The sequence spans 149 residues: Transcription antitermination protein NusB (149 aa).

Belongs to the NusB family.

Involved in transcription antitermination. Required for transcription of ribosomal RNA (rRNA) genes. Binds specifically to the boxA antiterminator sequence of the ribosomal RNA (rrn) operons. The chain is Transcription antitermination protein NusB from Acinetobacter baumannii (strain SDF).